The sequence spans 480 residues: ATP-dependent rRNA helicase RRP3 (480 aa).

Basic and acidic residues-rich tracts occupy residues 1 to 17 (MAKATEKRVKRAKKEES) and 33 to 46 (DTTKSDNEEEEPKK). The disordered stretch occupies residues 1-63 (MAKATEKRVK…VEVDESEEQT (63 aa)). The Q motif signature appears at 64–92 (KTFKDLGVIDSICETCEELKFTKPTPIQA). The Helicase ATP-binding domain occupies 95-266 (IPYALEGRDI…RASLVDPVRV (172 aa)). Residue 108–115 (AQTGSGKT) coordinates ATP. The DEAD box motif lies at 214–217 (DEAD). Residues 277 to 437 (NLLQYMVFCP…SYPLESEAVM (161 aa)) enclose the Helicase C-terminal domain. Residues 450–480 (AIQEMKGEDGTKKRSKFDKKRRRDEMDIGEQ) form a disordered region. Over residues 462–471 (KRSKFDKKRR) the composition is skewed to basic residues.

The protein belongs to the DEAD box helicase family. DDX47/RRP3 subfamily. As to quaternary structure, interacts with the SSU processome.

It localises to the nucleus. The enzyme catalyses ATP + H2O = ADP + phosphate + H(+). Its function is as follows. ATP-dependent rRNA helicase required for pre-ribosomal RNA processing. Involved in the maturation of the 35S-pre-rRNA and to its cleavage to mature 18S rRNA. This chain is ATP-dependent rRNA helicase RRP3, found in Yarrowia lipolytica (strain CLIB 122 / E 150) (Yeast).